A 294-amino-acid polypeptide reads, in one-letter code: Glyceraldehyde-3-phosphate dehydrogenase (294 aa).

Residues aspartate 19, arginine 63, and threonine 105 each contribute to the NAD(+) site. D-glyceraldehyde 3-phosphate-binding positions include 134–136 (SCT), threonine 165, 194–195 (TG), and arginine 217. The active-site Nucleophile is cysteine 135.

It belongs to the glyceraldehyde-3-phosphate dehydrogenase family. Homotetramer.

Its subcellular location is the cytoplasm. The enzyme catalyses D-glyceraldehyde 3-phosphate + phosphate + NAD(+) = (2R)-3-phospho-glyceroyl phosphate + NADH + H(+). The protein operates within carbohydrate degradation; glycolysis; pyruvate from D-glyceraldehyde 3-phosphate: step 1/5. Catalyzes the oxidative phosphorylation of glyceraldehyde 3-phosphate (G3P) to 1,3-bisphosphoglycerate (BPG) using the cofactor NAD. The first reaction step involves the formation of a hemiacetal intermediate between G3P and a cysteine residue, and this hemiacetal intermediate is then oxidized to a thioester, with concomitant reduction of NAD to NADH. The reduced NADH is then exchanged with the second NAD, and the thioester is attacked by a nucleophilic inorganic phosphate to produce BPG. In Shimwellia blattae (Escherichia blattae), this protein is Glyceraldehyde-3-phosphate dehydrogenase (gap).